A 231-amino-acid polypeptide reads, in one-letter code: D-allulose-6-phosphate 3-epimerase (231 aa).

Ser6 provides a ligand contact to substrate. A divalent metal cation is bound by residues His30, Asp32, and His63. The Proton acceptor role is filled by Asp32. Substrate is bound by residues His63, 140 to 143 (GFAG), 173 to 175 (DGS), and 195 to 197 (GTS). Asp173 lines the a divalent metal cation pocket. Asp173 acts as the Proton donor in catalysis.

This sequence belongs to the ribulose-phosphate 3-epimerase family. AlsE subfamily. As to quaternary structure, homohexamer. Trimer of dimers. Co(2+) is required as a cofactor. Requires Mn(2+) as cofactor. It depends on Zn(2+) as a cofactor.

The catalysed reaction is D-allulose 6-phosphate = keto-D-fructose 6-phosphate. The protein operates within carbohydrate degradation; D-allose degradation. Its function is as follows. Catalyzes the reversible epimerization of D-allulose 6-phosphate to D-fructose 6-phosphate. Can also catalyze with lower efficiency the reversible epimerization of D-ribulose 5-phosphate to D-xylulose 5-phosphate. In Escherichia coli (strain K12), this protein is D-allulose-6-phosphate 3-epimerase.